The chain runs to 181 residues: Small ribosomal subunit protein uS4 (181 aa).

The region spanning 108–172 (RRLQTQVYRR…SPLVSDIHSE (65 aa)) is the S4 RNA-binding domain.

It belongs to the universal ribosomal protein uS4 family. Part of the 30S ribosomal subunit. Contacts protein S5. The interaction surface between S4 and S5 is involved in control of translational fidelity.

Functionally, one of the primary rRNA binding proteins, it binds directly to 16S rRNA where it nucleates assembly of the body of the 30S subunit. In terms of biological role, with S5 and S12 plays an important role in translational accuracy. The protein is Small ribosomal subunit protein uS4 of Methanospirillum hungatei JF-1 (strain ATCC 27890 / DSM 864 / NBRC 100397 / JF-1).